The chain runs to 325 residues: Beta-ketoacyl-[acyl-carrier-protein] synthase III (325 aa).

Residues Cys116 and His252 contribute to the active site. Positions 253–257 are ACP-binding; that stretch reads QANLR. Residue Asn282 is part of the active site.

Belongs to the thiolase-like superfamily. FabH family. In terms of assembly, homodimer.

Its subcellular location is the cytoplasm. The catalysed reaction is malonyl-[ACP] + acetyl-CoA + H(+) = 3-oxobutanoyl-[ACP] + CO2 + CoA. Its pathway is lipid metabolism; fatty acid biosynthesis. Functionally, catalyzes the condensation reaction of fatty acid synthesis by the addition to an acyl acceptor of two carbons from malonyl-ACP. Catalyzes the first condensation reaction which initiates fatty acid synthesis and may therefore play a role in governing the total rate of fatty acid production. Possesses both acetoacetyl-ACP synthase and acetyl transacylase activities. Its substrate specificity determines the biosynthesis of branched-chain and/or straight-chain of fatty acids. The chain is Beta-ketoacyl-[acyl-carrier-protein] synthase III from Xanthomonas campestris pv. campestris (strain ATCC 33913 / DSM 3586 / NCPPB 528 / LMG 568 / P 25).